A 343-amino-acid chain; its full sequence is N-acetyl-gamma-glutamyl-phosphate reductase (343 aa).

The active site involves Cys149.

Belongs to the NAGSA dehydrogenase family. Type 1 subfamily.

The protein resides in the cytoplasm. The catalysed reaction is N-acetyl-L-glutamate 5-semialdehyde + phosphate + NADP(+) = N-acetyl-L-glutamyl 5-phosphate + NADPH + H(+). Its pathway is amino-acid biosynthesis; L-arginine biosynthesis; N(2)-acetyl-L-ornithine from L-glutamate: step 3/4. Its function is as follows. Catalyzes the NADPH-dependent reduction of N-acetyl-5-glutamyl phosphate to yield N-acetyl-L-glutamate 5-semialdehyde. The chain is N-acetyl-gamma-glutamyl-phosphate reductase from Alkalilimnicola ehrlichii (strain ATCC BAA-1101 / DSM 17681 / MLHE-1).